A 348-amino-acid polypeptide reads, in one-letter code: Dihydroorotase (348 aa).

Residues His-14 and His-16 each coordinate Zn(2+). Substrate is bound by residues 16–18 and Asn-42; that span reads HLR. The Zn(2+) site is built by Lys-100, His-137, and His-175. Lys-100 is subject to N6-carboxylysine. His-137 contacts substrate. A substrate-binding site is contributed by Leu-220. Residue Asp-248 participates in Zn(2+) binding. The active site involves Asp-248. His-252 and Ala-264 together coordinate substrate.

The protein belongs to the metallo-dependent hydrolases superfamily. DHOase family. Class II DHOase subfamily. Homodimer. Zn(2+) is required as a cofactor.

It catalyses the reaction (S)-dihydroorotate + H2O = N-carbamoyl-L-aspartate + H(+). It participates in pyrimidine metabolism; UMP biosynthesis via de novo pathway; (S)-dihydroorotate from bicarbonate: step 3/3. Its function is as follows. Catalyzes the reversible cyclization of carbamoyl aspartate to dihydroorotate. The chain is Dihydroorotase from Pseudomonas putida (strain ATCC 700007 / DSM 6899 / JCM 31910 / BCRC 17059 / LMG 24140 / F1).